The following is a 167-amino-acid chain: NAD(P)H-quinone oxidoreductase subunit I, chloroplastic (167 aa).

2 4Fe-4S ferredoxin-type domains span residues 55-84 (GRIH…VDWK) and 95-124 (LNYS…MTEE). Residues Cys-64, Cys-67, Cys-70, Cys-74, Cys-104, Cys-107, Cys-110, and Cys-114 each coordinate [4Fe-4S] cluster.

Belongs to the complex I 23 kDa subunit family. NDH is composed of at least 16 different subunits, 5 of which are encoded in the nucleus. Requires [4Fe-4S] cluster as cofactor.

Its subcellular location is the plastid. It is found in the chloroplast thylakoid membrane. It carries out the reaction a plastoquinone + NADH + (n+1) H(+)(in) = a plastoquinol + NAD(+) + n H(+)(out). The catalysed reaction is a plastoquinone + NADPH + (n+1) H(+)(in) = a plastoquinol + NADP(+) + n H(+)(out). Functionally, NDH shuttles electrons from NAD(P)H:plastoquinone, via FMN and iron-sulfur (Fe-S) centers, to quinones in the photosynthetic chain and possibly in a chloroplast respiratory chain. The immediate electron acceptor for the enzyme in this species is believed to be plastoquinone. Couples the redox reaction to proton translocation, and thus conserves the redox energy in a proton gradient. The sequence is that of NAD(P)H-quinone oxidoreductase subunit I, chloroplastic from Panax ginseng (Korean ginseng).